We begin with the raw amino-acid sequence, 945 residues long: Sensor kinase CckA (945 aa).

2 consecutive transmembrane segments (helical) span residues 111-131 (ALRL…YFLF) and 139-159 (FALV…FGAA). 3 PAS domains span residues 171-212 (HQDL…TDAD), 313-341 (LDHA…EWLG), and 432-505 (AEVR…FAGQ). The Histidine kinase domain occupies 574-797 (GIAHDFNNVL…TFKIFLPRLI (224 aa)). Position 577 is a phosphohistidine; by autocatalysis (His577). The 117-residue stretch at 825–941 (TVLLVEDEDA…QLATTVKEML (117 aa)) folds into the Response regulatory domain. The residue at position 876 (Asp876) is a 4-aspartylphosphate.

The protein resides in the cell inner membrane. The catalysed reaction is ATP + protein L-histidine = ADP + protein N-phospho-L-histidine.. Component of a regulatory phosphorelay system that controls B.abortus cell growth, division, and intracellular survival inside mammalian host cells. This signaling pathway is composed of CckA, ChpT, CtrA and CpdR. CckA autophosphorylates in the presence of ATP on a conserved His residue and transfers a phosphoryl group to a conserved Asp residue on its C-terminal receiver domain. CckA-P transfers phosphoryl groups to the ChpT phosphotransferase. The polypeptide is Sensor kinase CckA (Brucella abortus (strain 2308)).